A 230-amino-acid chain; its full sequence is Thioredoxin domain-containing protein PLP3A (230 aa).

The Thioredoxin domain maps to 89-173 (VSEGDFLGEV…GVAMDRLVGF (85 aa)). A disordered region spans residues 197–230 (LSKKKKEEDDEDAEYQESIRRSVRSSENLDSDSD).

The protein belongs to the phosducin family. Interacts with TUBB2, TUBB3, TUBB4 and TUBB5. In terms of tissue distribution, expressed in embryos, shoot meristems, leaf primordia, root meristems, floral meristems and young floral buds.

Its subcellular location is the cytoplasm. It is found in the nucleus. Its function is as follows. Tubulin-binding protein involved in microtubule formation. The sequence is that of Thioredoxin domain-containing protein PLP3A (PLP3A) from Arabidopsis thaliana (Mouse-ear cress).